A 629-amino-acid chain; its full sequence is Arginyl-tRNA--protein transferase 1 (629 aa).

Disordered regions lie at residues 274–298 (QNNS…TNEP) and 353–405 (PDES…ITKE). Residues 282–295 (TTTATTATTTTTTT) are compositionally biased toward low complexity. Residues 356–396 (SYDDYVYDGKDDDDDDDDKDEKEDDEDEDQEDDEDEDDGNN) are compositionally biased toward acidic residues.

The protein belongs to the R-transferase family.

The enzyme catalyses an N-terminal L-alpha-aminoacyl-[protein] + L-arginyl-tRNA(Arg) = an N-terminal L-arginyl-L-aminoacyl-[protein] + tRNA(Arg) + H(+). Involved in the post-translational conjugation of arginine to the N-terminal aspartate or glutamate of a protein. This arginylation is required for degradation of the protein via the ubiquitin pathway. Does not arginylate cysteine residues. This chain is Arginyl-tRNA--protein transferase 1 (ate1), found in Dictyostelium discoideum (Social amoeba).